We begin with the raw amino-acid sequence, 251 residues long: NADPH-dependent oxidoreductase (251 aa).

The protein belongs to the flavin oxidoreductase frp family. The cofactor is FMN.

Functionally, reduces FMN, organic nitro compounds and disulfide DTNB. Involved in maintenance of the cellular redox state and the disulfide stress response. The polypeptide is NADPH-dependent oxidoreductase (nfrA) (Staphylococcus aureus (strain MSSA476)).